The chain runs to 69 residues: Large ribosomal subunit protein uL29 (69 aa).

This sequence belongs to the universal ribosomal protein uL29 family.

This chain is Large ribosomal subunit protein uL29, found in Thermoanaerobacter pseudethanolicus (strain ATCC 33223 / 39E) (Clostridium thermohydrosulfuricum).